A 79-amino-acid chain; its full sequence is D-alanyl carrier protein (79 aa).

The Carrier domain maps to 1–77; sequence MDIKSEVIEI…KIIAGIVELQ (77 aa). Position 35 is an O-(pantetheine 4'-phosphoryl)serine (Ser35).

The protein belongs to the DltC family. In terms of processing, 4'-phosphopantetheine is transferred from CoA to a specific serine of apo-DCP.

It is found in the cytoplasm. Its pathway is cell wall biogenesis; lipoteichoic acid biosynthesis. Its function is as follows. Carrier protein involved in the D-alanylation of lipoteichoic acid (LTA). The loading of thioester-linked D-alanine onto DltC is catalyzed by D-alanine--D-alanyl carrier protein ligase DltA. The DltC-carried D-alanyl group is further transferred to cell membrane phosphatidylglycerol (PG) by forming an ester bond, probably catalyzed by DltD. D-alanylation of LTA plays an important role in modulating the properties of the cell wall in Gram-positive bacteria, influencing the net charge of the cell wall. This Streptococcus pneumoniae serotype 2 (strain D39 / NCTC 7466) protein is D-alanyl carrier protein.